A 264-amino-acid chain; its full sequence is Mediator of RNA polymerase II transcription subunit 4 (264 aa).

Residues Leu-183 to Phe-264 are disordered. Residues Asn-200 to Asp-225 are compositionally biased toward basic and acidic residues. Over residues Ala-236–Phe-264 the composition is skewed to acidic residues.

The protein belongs to the Mediator complex subunit 4 family. Component of the Mediator complex.

It is found in the nucleus. In terms of biological role, component of the Mediator complex, a coactivator involved in the regulated transcription of nearly all RNA polymerase II-dependent genes. Mediator functions as a bridge to convey information from gene-specific regulatory proteins to the basal RNA polymerase II transcription machinery. Mediator is recruited to promoters by direct interactions with regulatory proteins and serves as a scaffold for the assembly of a functional preinitiation complex with RNA polymerase II and the general transcription factors. The sequence is that of Mediator of RNA polymerase II transcription subunit 4 (MED4) from Candida glabrata (strain ATCC 2001 / BCRC 20586 / JCM 3761 / NBRC 0622 / NRRL Y-65 / CBS 138) (Yeast).